The primary structure comprises 88 residues: Large ribosomal subunit protein eL15 (88 aa).

Belongs to the eukaryotic ribosomal protein eL15 family.

This chain is Large ribosomal subunit protein eL15 (RPL15), found in Brassica napus (Rape).